The following is an 83-amino-acid chain: MKLTCVMIVAVLFLTTWTFVTADDSRYGLKNLFPKARHEMKNPEASKLNKRDECYPPGTFCGIKPGLCCSAICLSFVCISFDF.

A signal peptide spans 1-22 (MKLTCVMIVAVLFLTTWTFVTA). The propeptide occupies 23 to 49 (DDSRYGLKNLFPKARHEMKNPEASKLN). Disulfide bonds link C54–C69, C61–C73, and C68–C78. 2 positions are modified to 4-hydroxyproline: P56 and P65.

This sequence belongs to the conotoxin O1 superfamily. As to expression, expressed by the venom duct.

It localises to the secreted. Functionally, delta-conotoxins bind to site 6 of voltage-gated sodium channels (Nav) and inhibit the inactivation process. The protein is Delta-conotoxin-like MVIC of Conus magus (Magical cone).